Consider the following 394-residue polypeptide: SVGFKAGVKDYRLTYYTPEYETLATDILAAFRVTPQPGVPPEEAGAAVAAESSTGTWTTVWTDGLTSLDRYKGRCYHIEPVAGEENQYIAYVAYPLDLFEEGSVTNMFTSIVGNVFGFKALRALRLEDLRIPPAYSKTFQGPPHGIQVERDKLNKYGRPLLGCTIKPKLGLSAKNYGRAVYECLRGGLDFTKDDENVNSQPFMRWRDRFLFCAEAIYKAQAETGEIKGHYLNATAGTSEEMMKRAACARELGVPIVMHDYLTGGFTANTSLSHYCRDNGLLLHIHRAMHAVIDRQKNHGIHFRVLAKALRMSGGDHIHSGTVVGKLEGERDVTLGFVDLLRDDFIEKDRSRGIYFTQDWVSMPGVLPVASGGIHVWHMPALTEIFGDDSVLQFG.

The residue at position 5 (Lys-5) is an N6,N6,N6-trimethyllysine. Residues Asn-114 and Thr-164 each contribute to the substrate site. The Proton acceptor role is filled by Lys-166. Lys-168 provides a ligand contact to substrate. Mg(2+)-binding residues include Lys-192, Asp-194, and Glu-195. The residue at position 192 (Lys-192) is an N6-carboxylysine. The Proton acceptor role is filled by His-285. The substrate site is built by Arg-286, His-318, and Ser-370.

Belongs to the RuBisCO large chain family. Type I subfamily. As to quaternary structure, heterohexadecamer of 8 large chains and 8 small chains. The cofactor is Mg(2+).

It localises to the plastid. The protein resides in the chloroplast. It carries out the reaction 2 (2R)-3-phosphoglycerate + 2 H(+) = D-ribulose 1,5-bisphosphate + CO2 + H2O. The enzyme catalyses D-ribulose 1,5-bisphosphate + O2 = 2-phosphoglycolate + (2R)-3-phosphoglycerate + 2 H(+). In terms of biological role, ruBisCO catalyzes two reactions: the carboxylation of D-ribulose 1,5-bisphosphate, the primary event in carbon dioxide fixation, as well as the oxidative fragmentation of the pentose substrate in the photorespiration process. Both reactions occur simultaneously and in competition at the same active site. The sequence is that of Ribulose bisphosphate carboxylase large chain (rbcL) from Cabomba caroliniana (Carolina fanwort).